We begin with the raw amino-acid sequence, 297 residues long: 4-hydroxy-tetrahydrodipicolinate synthase (297 aa).

Position 49 (T49) interacts with pyruvate. The active-site Proton donor/acceptor is the Y137. Catalysis depends on K166, which acts as the Schiff-base intermediate with substrate. Residue I208 coordinates pyruvate.

This sequence belongs to the DapA family. In terms of assembly, homotetramer; dimer of dimers.

The protein resides in the cytoplasm. The enzyme catalyses L-aspartate 4-semialdehyde + pyruvate = (2S,4S)-4-hydroxy-2,3,4,5-tetrahydrodipicolinate + H2O + H(+). Its pathway is amino-acid biosynthesis; L-lysine biosynthesis via DAP pathway; (S)-tetrahydrodipicolinate from L-aspartate: step 3/4. Catalyzes the condensation of (S)-aspartate-beta-semialdehyde [(S)-ASA] and pyruvate to 4-hydroxy-tetrahydrodipicolinate (HTPA). This is 4-hydroxy-tetrahydrodipicolinate synthase from Chlorobium phaeobacteroides (strain BS1).